The primary structure comprises 122 residues: Large ribosomal subunit protein uL14c (122 aa).

Belongs to the universal ribosomal protein uL14 family. In terms of assembly, part of the 50S ribosomal subunit.

It localises to the plastid. Its subcellular location is the chloroplast. Its function is as follows. Binds to 23S rRNA. This Oltmannsiellopsis viridis (Marine flagellate) protein is Large ribosomal subunit protein uL14c.